A 486-amino-acid chain; its full sequence is Transcription enhancer factor-like protein egl-44 (486 aa).

The segment covering 47–57 (GTTTPTTTSGG) has biased composition (low complexity). The segment at 47–87 (GTTTPTTTSGGQMMTLSPPAGDGPGSAGSMAPESTSSLSDL) is disordered. A DNA-binding region (TEA) is located at residues 88–164 (SGDAEGVWSI…QVLARKKLRD (77 aa)). The tract at residues 165-188 (EQAKKKGDIPSLLQQASPPGGVKS) is disordered.

In terms of assembly, interacts (via N-terminus) with egl-46 (via C-terminus); the interaction is direct; the interaction may regulate transcription. Interacts with yap-1 (via WW domain); the interaction may regulate transcription. Expressed in HSN neurons in embryos and in the FLP neurons from the L1 stage through to adults. Not expressed in touch cells. Also expressed in larval hypodermis, intestine, pharyngeal muscle and other neurons. In adults expression is lost from some neurons, is weaker in the hypodermis but remains in the intestine. Expressed in HOB neuron, ray neurons RnA and RnB, and the ray structural cell, Rnst; rays are male-specific genital sensilla (simple sense organs).

The protein resides in the nucleus. Its function is as follows. Transcription factor. Binds to DNA sequence motif 5'-CATNNNNAAATGCAT-3' as a heterodimer with egl-46. Represses expression of genes involved in differentiation of touch receptor neurons (TRN), probably acting as a heterodimer with egl-46, perhaps by occupying similar cis-regulatory elements as an unc-86/mec-3 heterodimer. Plays a role in cell fate specification of neurons, including the hook neuron HOB, and touch receptor neurons. Involved in male mating behavior, acting in concert with egl-46, via modulation of expression of polycystins lov-1 and pkd-2, homeodomain protein ceh-26, and neuropeptide-like protein nlp-8. Acts upstream of egl-46 to prevent touch cell differentiation in FLP neurons. Plays a role in neuron differentiation by repressing the expression of zag-1 in FLP neurons, probably acting as a heterodimer with egl-46; because zag-1 represses expression of egl-46 and egl-44, together these proteins form a bistable, negative-feedback loop that regulates the choice between neuronal fates. Also promotes HSN neuron development. In association with egl-46, regulates cell cycle exit in the neuronal Q cell lineage. Plays a role in specifying commissural dendrites of the PVD nociceptive neurons, acting in concert with egl-46. May be involved in thermal stress response downstream of yap-1. The protein is Transcription enhancer factor-like protein egl-44 (egl-44) of Caenorhabditis elegans.